The chain runs to 537 residues: CTP synthase (537 aa).

Residues M1–I267 are amidoligase domain. S13 contributes to the CTP binding site. Residue S13 coordinates UTP. S14–I19 contacts ATP. Y54 contributes to the L-glutamine binding site. D71 provides a ligand contact to ATP. 2 residues coordinate Mg(2+): D71 and E141. Residues D148 to E150, K188 to Q193, and K224 contribute to the CTP site. Residues K188 to Q193 and K224 each bind UTP. Residues T292–S534 enclose the Glutamine amidotransferase type-1 domain. Position 354 (G354) interacts with L-glutamine. C381 (nucleophile; for glutamine hydrolysis) is an active-site residue. L-glutamine is bound by residues L382–Q385, E405, and R462. Active-site residues include H507 and E509.

Belongs to the CTP synthase family. Homotetramer.

It carries out the reaction UTP + L-glutamine + ATP + H2O = CTP + L-glutamate + ADP + phosphate + 2 H(+). It catalyses the reaction L-glutamine + H2O = L-glutamate + NH4(+). The catalysed reaction is UTP + NH4(+) + ATP = CTP + ADP + phosphate + 2 H(+). Its pathway is pyrimidine metabolism; CTP biosynthesis via de novo pathway; CTP from UDP: step 2/2. With respect to regulation, allosterically activated by GTP, when glutamine is the substrate; GTP has no effect on the reaction when ammonia is the substrate. The allosteric effector GTP functions by stabilizing the protein conformation that binds the tetrahedral intermediate(s) formed during glutamine hydrolysis. Inhibited by the product CTP, via allosteric rather than competitive inhibition. Catalyzes the ATP-dependent amination of UTP to CTP with either L-glutamine or ammonia as the source of nitrogen. Regulates intracellular CTP levels through interactions with the four ribonucleotide triphosphates. In Pelotomaculum thermopropionicum (strain DSM 13744 / JCM 10971 / SI), this protein is CTP synthase.